The following is a 211-amino-acid chain: ATP phosphoribosyltransferase (211 aa).

This sequence belongs to the ATP phosphoribosyltransferase family. Short subfamily. As to quaternary structure, heteromultimer composed of HisG and HisZ subunits.

The protein localises to the cytoplasm. The enzyme catalyses 1-(5-phospho-beta-D-ribosyl)-ATP + diphosphate = 5-phospho-alpha-D-ribose 1-diphosphate + ATP. Its pathway is amino-acid biosynthesis; L-histidine biosynthesis; L-histidine from 5-phospho-alpha-D-ribose 1-diphosphate: step 1/9. Functionally, catalyzes the condensation of ATP and 5-phosphoribose 1-diphosphate to form N'-(5'-phosphoribosyl)-ATP (PR-ATP). Has a crucial role in the pathway because the rate of histidine biosynthesis seems to be controlled primarily by regulation of HisG enzymatic activity. The polypeptide is ATP phosphoribosyltransferase (Pseudomonas paraeruginosa (strain DSM 24068 / PA7) (Pseudomonas aeruginosa (strain PA7))).